Consider the following 561-residue polypeptide: Putative cysteine ligase BshC (561 aa).

Residues 472-517 (LAQSVEKVMQSTLNQVENLKSKTIKAEKQRHNDLIAQIEKSRDNLL) adopt a coiled-coil conformation.

Belongs to the BshC family.

The protein is Putative cysteine ligase BshC of Chloroherpeton thalassium (strain ATCC 35110 / GB-78).